Reading from the N-terminus, the 336-residue chain is Pyridoxal 5'-phosphate synthase subunit PdxS (336 aa).

Position 64 (Asp64) interacts with D-ribose 5-phosphate. Residue Lys121 is the Schiff-base intermediate with D-ribose 5-phosphate of the active site. Gly193 is a D-ribose 5-phosphate binding site. Lys205 contributes to the D-glyceraldehyde 3-phosphate binding site. D-ribose 5-phosphate contacts are provided by residues Gly254 and 275–276 (GS).

Belongs to the PdxS/SNZ family. In terms of assembly, in the presence of PdxT, forms a dodecamer of heterodimers.

The enzyme catalyses aldehydo-D-ribose 5-phosphate + D-glyceraldehyde 3-phosphate + L-glutamine = pyridoxal 5'-phosphate + L-glutamate + phosphate + 3 H2O + H(+). The protein operates within cofactor biosynthesis; pyridoxal 5'-phosphate biosynthesis. In terms of biological role, catalyzes the formation of pyridoxal 5'-phosphate from ribose 5-phosphate (RBP), glyceraldehyde 3-phosphate (G3P) and ammonia. The ammonia is provided by the PdxT subunit. Can also use ribulose 5-phosphate and dihydroxyacetone phosphate as substrates, resulting from enzyme-catalyzed isomerization of RBP and G3P, respectively. This chain is Pyridoxal 5'-phosphate synthase subunit PdxS, found in Pyrobaculum aerophilum (strain ATCC 51768 / DSM 7523 / JCM 9630 / CIP 104966 / NBRC 100827 / IM2).